We begin with the raw amino-acid sequence, 92 residues long: Small ribosomal subunit protein uS19c (92 aa).

This sequence belongs to the universal ribosomal protein uS19 family.

Its subcellular location is the plastid. The protein localises to the chloroplast. Its function is as follows. Protein S19 forms a complex with S13 that binds strongly to the 16S ribosomal RNA. The polypeptide is Small ribosomal subunit protein uS19c (Physcomitrium patens (Spreading-leaved earth moss)).